Here is a 222-residue protein sequence, read N- to C-terminus: GTP cyclohydrolase 1 (222 aa).

Positions 111, 114, and 182 each coordinate Zn(2+).

The protein belongs to the GTP cyclohydrolase I family. Homomer.

The catalysed reaction is GTP + H2O = 7,8-dihydroneopterin 3'-triphosphate + formate + H(+). The protein operates within cofactor biosynthesis; 7,8-dihydroneopterin triphosphate biosynthesis; 7,8-dihydroneopterin triphosphate from GTP: step 1/1. This is GTP cyclohydrolase 1 from Klebsiella pneumoniae (strain 342).